The sequence spans 1016 residues: Nonsense-mediated mRNA decay factor SMG5 (1016 aa).

Residue Ser2 is modified to N-acetylserine. 2 positions are modified to phosphoserine: Ser2 and Ser423. 2 disordered regions span residues 408–561 (NPVP…PSEA) and 594–637 (PTTN…RSCR). The span at 449–466 (KSRKFSRLSCLRRRRHPP) shows a compositional bias: basic residues. The span at 594–603 (PTTNPHTSAS) shows a compositional bias: polar residues. The segment covering 619 to 628 (ASEEGSESEG) has biased composition (acidic residues). Residues 798-841 (QSEQESLLQQAQAQFRMAQEEARRNRLMRDMAQLRLQLEVSQLE) are a coiled coil. A PINc domain is found at 872-995 (RQLATSGRFI…GPMQAALQAA (124 aa)).

In terms of assembly, interacts with TERT, PPP2CA and SMG1. Part of a complex that contains SMG1, SMG5, SMG7, PPP2CA, a short isoform of UPF3A (isoform UPF3AS, but not isoform UPF3AL) and phosphorylated UPF1. Not detected in complexes that contain unphosphorylated UPF1. As to expression, ubiquitous.

The protein resides in the cytoplasm. It localises to the nucleus. Its function is as follows. Plays a role in nonsense-mediated mRNA decay. Does not have RNase activity by itself. Promotes dephosphorylation of UPF1. Together with SMG7 is thought to provide a link to the mRNA degradation machinery involving exonucleolytic pathways, and to serve as an adapter for UPF1 to protein phosphatase 2A (PP2A), thereby triggering UPF1 dephosphorylation. Necessary for TERT activity. This chain is Nonsense-mediated mRNA decay factor SMG5, found in Homo sapiens (Human).